Here is a 92-residue protein sequence, read N- to C-terminus: UPF0223 protein Sez_0908 (92 aa).

This sequence belongs to the UPF0223 family.

The sequence is that of UPF0223 protein Sez_0908 from Streptococcus equi subsp. zooepidemicus (strain MGCS10565).